Reading from the N-terminus, the 692-residue chain is Elongation factor G (692 aa).

The tr-type G domain occupies 8–282 (ENTRNIGIMA…AVIDYLPSPL (275 aa)). GTP contacts are provided by residues 17 to 24 (AHIDAGKT), 81 to 85 (DTPGH), and 135 to 138 (NKMD).

The protein belongs to the TRAFAC class translation factor GTPase superfamily. Classic translation factor GTPase family. EF-G/EF-2 subfamily.

The protein resides in the cytoplasm. Its function is as follows. Catalyzes the GTP-dependent ribosomal translocation step during translation elongation. During this step, the ribosome changes from the pre-translocational (PRE) to the post-translocational (POST) state as the newly formed A-site-bound peptidyl-tRNA and P-site-bound deacylated tRNA move to the P and E sites, respectively. Catalyzes the coordinated movement of the two tRNA molecules, the mRNA and conformational changes in the ribosome. The protein is Elongation factor G of Bacillus cereus (strain AH820).